The following is a 228-amino-acid chain: Cytochrome b6-f complex iron-sulfur subunit 1, chloroplastic (228 aa).

Residues Met-1–Met-49 constitute a chloroplast transit peptide. A helical transmembrane segment spans residues Leu-72–Val-92. Residues Ala-115–Phe-211 form the Rieske domain. [2Fe-2S] cluster contacts are provided by Cys-157, His-159, Cys-175, and His-178. Cys-162 and Cys-177 are oxidised to a cystine.

It belongs to the Rieske iron-sulfur protein family. As to quaternary structure, the 4 large subunits of the cytochrome b6-f complex are cytochrome b6, subunit IV (17 kDa polypeptide, petD), cytochrome f and the Rieske protein, while the 4 small subunits are petG, petL, petM and petN. The complex functions as a dimer. The cofactor is [2Fe-2S] cluster.

The protein localises to the plastid. Its subcellular location is the chloroplast thylakoid membrane. It catalyses the reaction 2 oxidized [plastocyanin] + a plastoquinol + 2 H(+)(in) = 2 reduced [plastocyanin] + a plastoquinone + 4 H(+)(out). Functionally, component of the cytochrome b6-f complex, which mediates electron transfer between photosystem II (PSII) and photosystem I (PSI), cyclic electron flow around PSI, and state transitions. This is Cytochrome b6-f complex iron-sulfur subunit 1, chloroplastic (petC1) from Nicotiana tabacum (Common tobacco).